The primary structure comprises 356 residues: Phosphoserine aminotransferase (356 aa).

Position 41 (arginine 41) interacts with L-glutamate. Residues 75–76 (AS), tryptophan 99, threonine 147, aspartate 166, and glutamine 189 contribute to the pyridoxal 5'-phosphate site. Lysine 190 bears the N6-(pyridoxal phosphate)lysine mark. 231–232 (NT) contributes to the pyridoxal 5'-phosphate binding site.

The protein belongs to the class-V pyridoxal-phosphate-dependent aminotransferase family. SerC subfamily. As to quaternary structure, homodimer. It depends on pyridoxal 5'-phosphate as a cofactor.

It localises to the cytoplasm. The enzyme catalyses O-phospho-L-serine + 2-oxoglutarate = 3-phosphooxypyruvate + L-glutamate. It catalyses the reaction 4-(phosphooxy)-L-threonine + 2-oxoglutarate = (R)-3-hydroxy-2-oxo-4-phosphooxybutanoate + L-glutamate. It functions in the pathway amino-acid biosynthesis; L-serine biosynthesis; L-serine from 3-phospho-D-glycerate: step 2/3. Its pathway is cofactor biosynthesis; pyridoxine 5'-phosphate biosynthesis; pyridoxine 5'-phosphate from D-erythrose 4-phosphate: step 3/5. Functionally, catalyzes the reversible conversion of 3-phosphohydroxypyruvate to phosphoserine and of 3-hydroxy-2-oxo-4-phosphonooxybutanoate to phosphohydroxythreonine. The chain is Phosphoserine aminotransferase from Phocaeicola vulgatus (strain ATCC 8482 / DSM 1447 / JCM 5826 / CCUG 4940 / NBRC 14291 / NCTC 11154) (Bacteroides vulgatus).